Here is a 98-residue protein sequence, read N- to C-terminus: UPF0213 protein BPUM_0019 (98 aa).

In terms of domain architecture, GIY-YIG spans 4–79; sequence HNHYFYVLKC…KTWTRKKKDL (76 aa).

Belongs to the UPF0213 family.

This Bacillus pumilus (strain SAFR-032) protein is UPF0213 protein BPUM_0019.